The following is a 210-amino-acid chain: Probable nicotinate-nucleotide adenylyltransferase (210 aa).

It belongs to the NadD family.

The enzyme catalyses nicotinate beta-D-ribonucleotide + ATP + H(+) = deamido-NAD(+) + diphosphate. It participates in cofactor biosynthesis; NAD(+) biosynthesis; deamido-NAD(+) from nicotinate D-ribonucleotide: step 1/1. In terms of biological role, catalyzes the reversible adenylation of nicotinate mononucleotide (NaMN) to nicotinic acid adenine dinucleotide (NaAD). This is Probable nicotinate-nucleotide adenylyltransferase from Vesicomyosocius okutanii subsp. Calyptogena okutanii (strain HA).